The following is a 553-amino-acid chain: Dihydroxy-acid dehydratase (553 aa).

Aspartate 78 contributes to the Mg(2+) binding site. Cysteine 119 serves as a coordination point for [2Fe-2S] cluster. The Mg(2+) site is built by aspartate 120 and lysine 121. An N6-carboxylysine modification is found at lysine 121. Cysteine 193 contacts [2Fe-2S] cluster. Position 441 (glutamate 441) interacts with Mg(2+). Serine 467 functions as the Proton acceptor in the catalytic mechanism.

The protein belongs to the IlvD/Edd family. As to quaternary structure, homodimer. [2Fe-2S] cluster is required as a cofactor. The cofactor is Mg(2+).

It carries out the reaction (2R)-2,3-dihydroxy-3-methylbutanoate = 3-methyl-2-oxobutanoate + H2O. The catalysed reaction is (2R,3R)-2,3-dihydroxy-3-methylpentanoate = (S)-3-methyl-2-oxopentanoate + H2O. It functions in the pathway amino-acid biosynthesis; L-isoleucine biosynthesis; L-isoleucine from 2-oxobutanoate: step 3/4. Its pathway is amino-acid biosynthesis; L-valine biosynthesis; L-valine from pyruvate: step 3/4. Functions in the biosynthesis of branched-chain amino acids. Catalyzes the dehydration of (2R,3R)-2,3-dihydroxy-3-methylpentanoate (2,3-dihydroxy-3-methylvalerate) into 2-oxo-3-methylpentanoate (2-oxo-3-methylvalerate) and of (2R)-2,3-dihydroxy-3-methylbutanoate (2,3-dihydroxyisovalerate) into 2-oxo-3-methylbutanoate (2-oxoisovalerate), the penultimate precursor to L-isoleucine and L-valine, respectively. The polypeptide is Dihydroxy-acid dehydratase (Pelobacter propionicus (strain DSM 2379 / NBRC 103807 / OttBd1)).